Consider the following 586-residue polypeptide: Laccase-9 (586 aa).

Residues 1–25 form the signal peptide; that stretch reads MPRVHHSLSNQAFLVLLLFSSIASA. Plastocyanin-like domains lie at 33–149 and 159–307; these read HVKD…PRSG and KEVP…YEGA. N-linked (GlcNAc...) asparagine glycosylation is found at asparagine 52, asparagine 74, and asparagine 79. The Cu cation site is built by histidine 83 and histidine 85. Residue asparagine 111 is glycosylated (N-linked (GlcNAc...) asparagine). The Cu cation site is built by histidine 128 and histidine 130. N-linked (GlcNAc...) asparagine glycosylation is found at asparagine 236, asparagine 333, asparagine 385, asparagine 403, and asparagine 451. Positions 411-552 constitute a Plastocyanin-like 3 domain; the sequence is DFPDQPPLKF…MMAFIVQNGP (142 aa). Positions 469, 472, 474, 531, 532, 533, and 537 each coordinate Cu cation.

It belongs to the multicopper oxidase family. Cu cation is required as a cofactor. Predominantly expressed in roots.

It is found in the secreted. It localises to the extracellular space. Its subcellular location is the apoplast. It carries out the reaction 4 hydroquinone + O2 = 4 benzosemiquinone + 2 H2O. Lignin degradation and detoxification of lignin-derived products. The chain is Laccase-9 (LAC9) from Arabidopsis thaliana (Mouse-ear cress).